A 319-amino-acid chain; its full sequence is MHDSDRQKTILAILGPTASGKSALAFSIAKEINAEIISADSRQIYRELNIGTAKPSQETLRQIKHHFVNELSIGDPFTAGNFAREASARIRNILHSGKNVLIAGGSTLYLEALLNGFADLPPADTEKRQQLAIELETFGSKHLFERLRQLDPLQAATLDHTKTQRLVRSLEIIELSGHTVTEMQKKHIQPLADINVITCGLSLPRPLLYEKINRRTDQMLASGLLQEAVALFTKYYPYCDVITTNALQTVGYQELFAYLDEKTDFKTAITLIKQHTRNYAKRQLTFFKNRLNVNWMDAPENEHELSMLTTSCCRMITGN.

15–22 (GPTASGKS) contributes to the ATP binding site. 17–22 (TASGKS) lines the substrate pocket. Interaction with substrate tRNA regions lie at residues 40-43 (DSRQ) and 164-168 (QRLVR).

This sequence belongs to the IPP transferase family. As to quaternary structure, monomer. Mg(2+) is required as a cofactor.

It catalyses the reaction adenosine(37) in tRNA + dimethylallyl diphosphate = N(6)-dimethylallyladenosine(37) in tRNA + diphosphate. Its function is as follows. Catalyzes the transfer of a dimethylallyl group onto the adenine at position 37 in tRNAs that read codons beginning with uridine, leading to the formation of N6-(dimethylallyl)adenosine (i(6)A). The polypeptide is tRNA dimethylallyltransferase (Chlorobium phaeobacteroides (strain DSM 266 / SMG 266 / 2430)).